Reading from the N-terminus, the 702-residue chain is Polyribonucleotide nucleotidyltransferase (702 aa).

2 residues coordinate Mg(2+): Asp487 and Asp493. One can recognise a KH domain in the interval Pro554–Ile613. The S1 motif domain occupies Gly623–Lys691.

It belongs to the polyribonucleotide nucleotidyltransferase family. Requires Mg(2+) as cofactor.

It localises to the cytoplasm. The enzyme catalyses RNA(n+1) + phosphate = RNA(n) + a ribonucleoside 5'-diphosphate. Functionally, involved in mRNA degradation. Catalyzes the phosphorolysis of single-stranded polyribonucleotides processively in the 3'- to 5'-direction. This chain is Polyribonucleotide nucleotidyltransferase, found in Anoxybacillus flavithermus (strain DSM 21510 / WK1).